The primary structure comprises 449 residues: Cyclin-B1-5 (449 aa).

Disordered regions lie at residues 1–37 and 98–147; these read MATR…AGRP and PARK…GGSA. 2 stretches are compositionally biased toward low complexity: residues 8-37 and 136-147; these read AAAA…AGRP and SEGAGSSSGGSA.

Belongs to the cyclin family. Cyclin AB subfamily.

The protein is Cyclin-B1-5 (CYCB1-5) of Oryza sativa subsp. japonica (Rice).